The chain runs to 231 residues: Large ribosomal subunit protein uL1 (231 aa).

It belongs to the universal ribosomal protein uL1 family. In terms of assembly, part of the 50S ribosomal subunit.

Binds directly to 23S rRNA. The L1 stalk is quite mobile in the ribosome, and is involved in E site tRNA release. In terms of biological role, protein L1 is also a translational repressor protein, it controls the translation of the L11 operon by binding to its mRNA. The sequence is that of Large ribosomal subunit protein uL1 from Chlorobaculum tepidum (strain ATCC 49652 / DSM 12025 / NBRC 103806 / TLS) (Chlorobium tepidum).